We begin with the raw amino-acid sequence, 118 residues long: Cell division protein FtsB (118 aa).

The Cytoplasmic portion of the chain corresponds to 1–3 (MRL). Residues 4–21 (LFLVLLVLLGLIQYPLWL) form a helical membrane-spanning segment. Over 22–118 (GKGGWFKVWD…PRPPATPPRR (97 aa)) the chain is Periplasmic. A coiled-coil region spans residues 28–62 (KVWDLQRQVAEQRETNDGLRARNTALEAEVRDLAT). Residues 88–118 (LPPGTPLPSGNSTPQASALSKPRPPATPPRR) are disordered. The segment covering 95 to 105 (PSGNSTPQASA) has biased composition (polar residues). Over residues 109–118 (PRPPATPPRR) the composition is skewed to pro residues.

It belongs to the FtsB family. As to quaternary structure, part of a complex composed of FtsB, FtsL and FtsQ.

The protein resides in the cell inner membrane. Its function is as follows. Essential cell division protein. May link together the upstream cell division proteins, which are predominantly cytoplasmic, with the downstream cell division proteins, which are predominantly periplasmic. This is Cell division protein FtsB from Bordetella parapertussis (strain 12822 / ATCC BAA-587 / NCTC 13253).